The primary structure comprises 263 residues: MGELYLVGGGLSDVRDLTLRALEVLASVELVLVDTYTSVYDVSEGDLKRLLNGFGGDPEVRMCSRRDLEERFFDLCEGYDRVALLSPGDPMAATTHVALVVEAADRGWDVEIINGVSVFTAAPSKSGLEMYRFGRTATIPLNVRSVYPYDVLESNRQAGLHTLFLLEVAEDGEFVSVADAARYLLEIEREEGRGVLDPSDLAIAVVRLGFEDELVAWGTLEELSDWEPGEPPQALILPASRLREAEREYIRRVLPHIRDVRGV.

Residues Leu-11, Asp-89, Ala-92, 117 to 118 (SV), Leu-166, and Leu-208 contribute to the S-adenosyl-L-methionine site.

The protein belongs to the diphthine synthase family. Homodimer.

It catalyses the reaction 2-[(3S)-amino-3-carboxypropyl]-L-histidyl-[translation elongation factor 2] + 3 S-adenosyl-L-methionine = diphthine-[translation elongation factor 2] + 3 S-adenosyl-L-homocysteine + 3 H(+). Its pathway is protein modification; peptidyl-diphthamide biosynthesis. In terms of biological role, S-adenosyl-L-methionine-dependent methyltransferase that catalyzes the trimethylation of the amino group of the modified target histidine residue in translation elongation factor 2 (EF-2), to form an intermediate called diphthine. The three successive methylation reactions represent the second step of diphthamide biosynthesis. The chain is Diphthine synthase from Methanopyrus kandleri (strain AV19 / DSM 6324 / JCM 9639 / NBRC 100938).